The primary structure comprises 399 residues: MTKTTLSSDPWSIKKPTALLVLADGTVIEGEGIGAIGIVEAEVCFNTAITGYEEILTDPSYTGQIINFTFPHIGNVGTNSEDIEDLTPLHHYGAVGAIFKAHSSPSNYRANENLNQWLKKHQIIALCGIDTRALTALIREKGAQNAVIAHDPNGNFDINALKERAQKWSGLLNLDLAKEVTSKQSIEWNEKPWIWNKGYTINNEYNFHIVAIDYGIKRNILRLMAAQGARITVVPAHTSVQEILAMKPDGIFLSNGPGDPNATAEYAVPMIKTFIECNIPLFGICLGHQLLALAVGAKTIKMHQGHHGANHPVKNLITEKVEITSMNHGFTVDSTSLPQYVEETHISLFDSTNCGIQIIGKPAFSVQYHPEASPGPQDSHYLFQRFHDLIVNYREQSNK.

A CPSase region spans residues 1-204; sequence MTKTTLSSDP…WNKGYTINNE (204 aa). L-glutamine is bound by residues S60, G256, and G258. The Glutamine amidotransferase type-1 domain maps to 208-396; the sequence is HIVAIDYGIK…HDLIVNYREQ (189 aa). C285 serves as the catalytic Nucleophile. Residues L286, Q289, N327, G329, and F330 each contribute to the L-glutamine site. Active-site residues include H369 and E371.

The protein belongs to the CarA family. Composed of two chains; the small (or glutamine) chain promotes the hydrolysis of glutamine to ammonia, which is used by the large (or ammonia) chain to synthesize carbamoyl phosphate. Tetramer of heterodimers (alpha,beta)4.

The catalysed reaction is hydrogencarbonate + L-glutamine + 2 ATP + H2O = carbamoyl phosphate + L-glutamate + 2 ADP + phosphate + 2 H(+). It catalyses the reaction L-glutamine + H2O = L-glutamate + NH4(+). It participates in amino-acid biosynthesis; L-arginine biosynthesis; carbamoyl phosphate from bicarbonate: step 1/1. The protein operates within pyrimidine metabolism; UMP biosynthesis via de novo pathway; (S)-dihydroorotate from bicarbonate: step 1/3. Functionally, small subunit of the glutamine-dependent carbamoyl phosphate synthetase (CPSase). CPSase catalyzes the formation of carbamoyl phosphate from the ammonia moiety of glutamine, carbonate, and phosphate donated by ATP, constituting the first step of 2 biosynthetic pathways, one leading to arginine and/or urea and the other to pyrimidine nucleotides. The small subunit (glutamine amidotransferase) binds and cleaves glutamine to supply the large subunit with the substrate ammonia. The sequence is that of Carbamoyl phosphate synthase small chain from Bartonella bacilliformis (strain ATCC 35685 / KC583 / Herrer 020/F12,63).